The primary structure comprises 396 residues: MAKEKFERSKPHVNVGTIGHVDHGKTTLTAALTIVQGKKFGGDSKDYASIDNAPEERERGITISTAHVEYESETRHYAHVDCPGHADYVKNMITGAAQMDGAILVCSAADGPMPQTREHILLSRQVGVPYIVVYLNKADMVDDEELLELVEMEVRELLDTYDFPGDDTPVIMGSALKAIEGDQSEIGEPSIGRLVDALDSYIPEPTRETDKPFLMPVEDIFSIQGRGTVATGRVETGVVKVGEEIEIVGIRPTTTTTVTGVEMFRKLLDQGEAGDNVGILLRGTKREDIERGQVLAHKGTVTPHTKFEAEVYVLSKDEGGRHTPFFQGYRPQFYFRTTDVTGACELPAGTEMVMPGDNVQMTVELINPIAMNEGLRFAIREGGRTVGAGVVAKIID.

Positions 10–206 constitute a tr-type G domain; that stretch reads KPHVNVGTIG…ALDSYIPEPT (197 aa). The tract at residues 19 to 26 is G1; sequence GHVDHGKT. 19–26 is a binding site for GTP; the sequence is GHVDHGKT. Thr-26 is a Mg(2+) binding site. The tract at residues 60–64 is G2; that stretch reads GITIS. Residues 81 to 84 are G3; sequence DCPG. Residues 81-85 and 136-139 each bind GTP; these read DCPGH and NKAD. A G4 region spans residues 136-139; the sequence is NKAD. The interval 174–176 is G5; that stretch reads SAL.

This sequence belongs to the TRAFAC class translation factor GTPase superfamily. Classic translation factor GTPase family. EF-Tu/EF-1A subfamily. In terms of assembly, monomer.

The protein resides in the cytoplasm. The catalysed reaction is GTP + H2O = GDP + phosphate + H(+). Its function is as follows. GTP hydrolase that promotes the GTP-dependent binding of aminoacyl-tRNA to the A-site of ribosomes during protein biosynthesis. The polypeptide is Elongation factor Tu (Hydrogenovibrio crunogenus (strain DSM 25203 / XCL-2) (Thiomicrospira crunogena)).